Consider the following 84-residue polypeptide: UPF0457 protein BT9727_2307 (84 aa).

The protein belongs to the UPF0457 family.

This is UPF0457 protein BT9727_2307 from Bacillus thuringiensis subsp. konkukian (strain 97-27).